The following is a 282-amino-acid chain: Bifunctional protein FolD (282 aa).

NADP(+) contacts are provided by residues 165–167 (GAS) and Ile-231.

It belongs to the tetrahydrofolate dehydrogenase/cyclohydrolase family. As to quaternary structure, homodimer.

The enzyme catalyses (6R)-5,10-methylene-5,6,7,8-tetrahydrofolate + NADP(+) = (6R)-5,10-methenyltetrahydrofolate + NADPH. It carries out the reaction (6R)-5,10-methenyltetrahydrofolate + H2O = (6R)-10-formyltetrahydrofolate + H(+). The protein operates within one-carbon metabolism; tetrahydrofolate interconversion. In terms of biological role, catalyzes the oxidation of 5,10-methylenetetrahydrofolate to 5,10-methenyltetrahydrofolate and then the hydrolysis of 5,10-methenyltetrahydrofolate to 10-formyltetrahydrofolate. In Francisella tularensis subsp. mediasiatica (strain FSC147), this protein is Bifunctional protein FolD.